A 108-amino-acid polypeptide reads, in one-letter code: Nucleoid-associated protein Mpe_A2533 (108 aa).

The segment at 86–108 (TSEEKMGKLTAGMPLPPGMKLPF) is disordered. Positions 99 to 108 (PLPPGMKLPF) are enriched in pro residues.

The protein belongs to the YbaB/EbfC family. In terms of assembly, homodimer.

The protein localises to the cytoplasm. It is found in the nucleoid. Its function is as follows. Binds to DNA and alters its conformation. May be involved in regulation of gene expression, nucleoid organization and DNA protection. This Methylibium petroleiphilum (strain ATCC BAA-1232 / LMG 22953 / PM1) protein is Nucleoid-associated protein Mpe_A2533.